The sequence spans 175 residues: Probable RNA-binding protein EIF1AD (175 aa).

Positions 5–89 (TKKRYITNKV…VKGEIEYILD (85 aa)) constitute an S1-like domain. Basic and acidic residues predominate over residues 116-128 (EAKRGQTSDKMID). Positions 116–175 (EAKRGQTSDKMIDDDMLPPSESEEEDESEGEETYDEDDVDDEEEEEFDTYNPNRMQAPSK) are disordered. Residues 129-163 (DDMLPPSESEEEDESEGEETYDEDDVDDEEEEEFD) show a composition bias toward acidic residues. Residues 165–175 (YNPNRMQAPSK) are compositionally biased toward polar residues.

The protein belongs to the EIF1AD family.

This Caenorhabditis elegans protein is Probable RNA-binding protein EIF1AD.